Consider the following 437-residue polypeptide: MRLSRHFLPVMKESPADAQIVSHKLMLRAGMIRQTAAGIYAWLPLGHRVLRKIEQIVREEQDRAGAIELLMPTMQSADLWRESGRYDAYGPEMLRIKDRHDREMLFGPTNEEMITAIFRDNARSYRDLPRILYHIQWKFRDEVRPRFGVMRGREFLMKDAYSFDLDIEGARHSYNRMFVAYLRTFRRMGLSAIPMQADTGPIGGDLSHEFIVLAPTGESEVFYHTNWEVERALDVDVDDVAALQGFVDGLTADYAATDEKRDPAREAAAGDSLKQSRGIEVGHIFYFGTKYSAAMGMTVQGPDGQPVTPQMGSYGIGVSRLMGAIIEASHDDAGIVWPDAVAPYTVGLINMRADDARCAAAADDLYAKLEAAGIETLYDDRDERGGAKFATMDLIGLPWQIVVGPKGLDKGVVELKRRATGEKVELSVEDAIARIAG.

Belongs to the class-II aminoacyl-tRNA synthetase family. ProS type 2 subfamily. In terms of assembly, homodimer.

It is found in the cytoplasm. It carries out the reaction tRNA(Pro) + L-proline + ATP = L-prolyl-tRNA(Pro) + AMP + diphosphate. Catalyzes the attachment of proline to tRNA(Pro) in a two-step reaction: proline is first activated by ATP to form Pro-AMP and then transferred to the acceptor end of tRNA(Pro). This chain is Proline--tRNA ligase, found in Rhizorhabdus wittichii (strain DSM 6014 / CCUG 31198 / JCM 15750 / NBRC 105917 / EY 4224 / RW1) (Sphingomonas wittichii).